The chain runs to 165 residues: Large ribosomal subunit protein uL10 (165 aa).

The protein belongs to the universal ribosomal protein uL10 family. As to quaternary structure, part of the ribosomal stalk of the 50S ribosomal subunit. The N-terminus interacts with L11 and the large rRNA to form the base of the stalk. The C-terminus forms an elongated spine to which L12 dimers bind in a sequential fashion forming a multimeric L10(L12)X complex.

In terms of biological role, forms part of the ribosomal stalk, playing a central role in the interaction of the ribosome with GTP-bound translation factors. The polypeptide is Large ribosomal subunit protein uL10 (Deinococcus deserti (strain DSM 17065 / CIP 109153 / LMG 22923 / VCD115)).